We begin with the raw amino-acid sequence, 90 residues long: Small ribosomal subunit protein bS16 (90 aa).

This sequence belongs to the bacterial ribosomal protein bS16 family.

This Heliobacterium modesticaldum (strain ATCC 51547 / Ice1) protein is Small ribosomal subunit protein bS16.